Reading from the N-terminus, the 1461-residue chain is Pleiotropic drug resistance protein 2 (1461 aa).

One can recognise an ABC transporter 1 domain in the interval 172-445; it reads LGLIHLSPSK…FEYMGFRCPE (274 aa). 205-212 is a binding site for ATP; it reads GPPGSGKT. The region spanning 523 to 736 is the ABC transmembrane type-2 1 domain; it reads ELFKSCFTRE…GQNAIAINEF (214 aa). 6 consecutive transmembrane segments (helical) span residues 541–561, 577–597, 622–642, 660–680, 685–705, and 771–791; these read FLYI…LTVF, FWGA…QELA, LPIW…WIIL, LLAF…IAAA, VVAN…GGFI, and ISIG…IAAL. The ABC transporter 2 domain occupies 859–1111; it reads LAFNHVNYYV…KLVEYFETIP (253 aa). An ATP-binding site is contributed by 904-911; that stretch reads GVSGAGKT. The 215-residue stretch at 1184-1398 folds into the ABC transmembrane type-2 2 domain; the sequence is TQCKACFWKQ…TIYGIFASQV (215 aa). 7 consecutive transmembrane segments (helical) span residues 1203–1223, 1243–1263, 1291–1311, 1321–1341, 1348–1368, 1379–1399, and 1430–1450; these read YNAI…VIFW, YAAV…VVAI, TIYV…MIGY, FYYF…MVVA, IAAI…GFLI, WYYW…SQVG, and FLLV…FVFA.

Belongs to the ABC transporter superfamily. ABCG family. PDR (TC 3.A.1.205) subfamily.

Its subcellular location is the membrane. Its function is as follows. May be a general defense protein. This Nicotiana plumbaginifolia (Leadwort-leaved tobacco) protein is Pleiotropic drug resistance protein 2 (PDR2).